The chain runs to 471 residues: UDP-N-acetylmuramate--L-alanine ligase (471 aa).

122-128 is a binding site for ATP; it reads GTHGKTT.

Belongs to the MurCDEF family.

The protein localises to the cytoplasm. The enzyme catalyses UDP-N-acetyl-alpha-D-muramate + L-alanine + ATP = UDP-N-acetyl-alpha-D-muramoyl-L-alanine + ADP + phosphate + H(+). It participates in cell wall biogenesis; peptidoglycan biosynthesis. In terms of biological role, cell wall formation. The polypeptide is UDP-N-acetylmuramate--L-alanine ligase (Cutibacterium acnes (strain DSM 16379 / KPA171202) (Propionibacterium acnes)).